A 155-amino-acid polypeptide reads, in one-letter code: Molybdopterin synthase catalytic subunit 1 (155 aa).

Residues 101 to 102 (HR), lysine 117, and 124 to 126 (KKE) each bind substrate.

This sequence belongs to the MoaE family. MOCS2B subfamily. As to quaternary structure, heterotetramer; composed of 2 small (MOCS2A) and 2 large (MOCS2B) subunits.

The protein localises to the cytoplasm. The catalysed reaction is 2 [molybdopterin-synthase sulfur-carrier protein]-C-terminal-Gly-aminoethanethioate + cyclic pyranopterin phosphate + H2O = molybdopterin + 2 [molybdopterin-synthase sulfur-carrier protein]-C-terminal Gly-Gly + 2 H(+). The protein operates within cofactor biosynthesis; molybdopterin biosynthesis. Its function is as follows. Catalytic subunit of the molybdopterin synthase complex, a complex that catalyzes the conversion of precursor Z into molybdopterin. Acts by mediating the incorporation of 2 sulfur atoms from thiocarboxylated MOCS2A into precursor Z to generate a dithiolene group. The chain is Molybdopterin synthase catalytic subunit 1 from Aedes aegypti (Yellowfever mosquito).